The primary structure comprises 493 residues: 3-octaprenyl-4-hydroxybenzoate carboxy-lyase (493 aa).

Residue N177 participates in Mn(2+) binding. Prenylated FMN contacts are provided by residues 180–182 (IYR), 194–196 (RWL), and 199–200 (RG). Residue E243 participates in Mn(2+) binding. Catalysis depends on D292, which acts as the Proton donor.

The protein belongs to the UbiD family. As to quaternary structure, homohexamer. The cofactor is prenylated FMN. It depends on Mn(2+) as a cofactor.

The protein localises to the cell membrane. The catalysed reaction is a 4-hydroxy-3-(all-trans-polyprenyl)benzoate + H(+) = a 2-(all-trans-polyprenyl)phenol + CO2. It functions in the pathway cofactor biosynthesis; ubiquinone biosynthesis. Its function is as follows. Catalyzes the decarboxylation of 3-octaprenyl-4-hydroxy benzoate to 2-octaprenylphenol, an intermediate step in ubiquinone biosynthesis. This is 3-octaprenyl-4-hydroxybenzoate carboxy-lyase from Colwellia psychrerythraea (strain 34H / ATCC BAA-681) (Vibrio psychroerythus).